The chain runs to 702 residues: Ribosomal RNA large subunit methyltransferase K/L (702 aa).

Residues 43-154 (LVYQSLMWSR…KETASIALDL (112 aa)) enclose the THUMP domain.

Belongs to the methyltransferase superfamily. RlmKL family.

The protein localises to the cytoplasm. It carries out the reaction guanosine(2445) in 23S rRNA + S-adenosyl-L-methionine = N(2)-methylguanosine(2445) in 23S rRNA + S-adenosyl-L-homocysteine + H(+). It catalyses the reaction guanosine(2069) in 23S rRNA + S-adenosyl-L-methionine = N(2)-methylguanosine(2069) in 23S rRNA + S-adenosyl-L-homocysteine + H(+). Functionally, specifically methylates the guanine in position 2445 (m2G2445) and the guanine in position 2069 (m7G2069) of 23S rRNA. The chain is Ribosomal RNA large subunit methyltransferase K/L from Shigella boydii serotype 4 (strain Sb227).